We begin with the raw amino-acid sequence, 474 residues long: Serine/threonine-protein kinase ksp1 (474 aa).

The Protein kinase domain occupies 9–280 (YKVERPLNKG…EAVLAVTKWT (272 aa)). Residues 15 to 23 (LNKGSYGTV) and lysine 43 each bind ATP. The Proton acceptor role is filled by aspartate 137. Residues 345–373 (VDENISTSSSPRSPASLAPVNNSERSYDS) are disordered. Over residues 350-363 (STSSSPRSPASLAP) the composition is skewed to low complexity. Phosphoserine is present on residues serine 353, serine 354, serine 357, serine 378, serine 404, and serine 413.

The protein belongs to the protein kinase superfamily. Ser/Thr protein kinase family.

It localises to the cytoplasm. The protein resides in the nucleus. It carries out the reaction L-seryl-[protein] + ATP = O-phospho-L-seryl-[protein] + ADP + H(+). The enzyme catalyses L-threonyl-[protein] + ATP = O-phospho-L-threonyl-[protein] + ADP + H(+). The polypeptide is Serine/threonine-protein kinase ksp1 (ksp1) (Schizosaccharomyces pombe (strain 972 / ATCC 24843) (Fission yeast)).